Reading from the N-terminus, the 290-residue chain is N-acetylneuraminate lyase (290 aa).

2 residues coordinate aceneuramate: Ser44 and Thr45. Tyr133 serves as the catalytic Proton donor. The Schiff-base intermediate with substrate role is filled by Lys161. Aceneuramate is bound by residues Thr163, Gly185, Asp187, Glu188, and Ser204.

The protein belongs to the DapA family. NanA subfamily. As to quaternary structure, homotetramer.

The protein localises to the cytoplasm. The catalysed reaction is aceneuramate = aldehydo-N-acetyl-D-mannosamine + pyruvate. The protein operates within amino-sugar metabolism; N-acetylneuraminate degradation; D-fructose 6-phosphate from N-acetylneuraminate: step 1/5. In terms of biological role, catalyzes the reversible aldol cleavage of N-acetylneuraminic acid (sialic acid; Neu5Ac) to form pyruvate and N-acetylmannosamine (ManNAc) via a Schiff base intermediate. The chain is N-acetylneuraminate lyase from Fusobacterium nucleatum subsp. nucleatum (strain ATCC 25586 / DSM 15643 / BCRC 10681 / CIP 101130 / JCM 8532 / KCTC 2640 / LMG 13131 / VPI 4355).